A 657-amino-acid polypeptide reads, in one-letter code: UvrABC system protein B (657 aa).

Positions 23-414 (KSIKKGNKYQ…KENIFHQIMR (392 aa)) constitute a Helicase ATP-binding domain. 36–43 (GVTGSGKT) lines the ATP pocket. A Beta-hairpin motif is present at residues 89 to 112 (YYDYYQPEAYIPRTDVFIEKDSST). Residues 431-593 (QVEILFDEAK…ITPTSVKRHI (163 aa)) enclose the Helicase C-terminal domain. Positions 622–657 (AKLVKELRKQMLEAAKALEFEKAAAIRDEINKLRDL) constitute a UVR domain.

The protein belongs to the UvrB family. As to quaternary structure, forms a heterotetramer with UvrA during the search for lesions. Interacts with UvrC in an incision complex.

It localises to the cytoplasm. The UvrABC repair system catalyzes the recognition and processing of DNA lesions. A damage recognition complex composed of 2 UvrA and 2 UvrB subunits scans DNA for abnormalities. Upon binding of the UvrA(2)B(2) complex to a putative damaged site, the DNA wraps around one UvrB monomer. DNA wrap is dependent on ATP binding by UvrB and probably causes local melting of the DNA helix, facilitating insertion of UvrB beta-hairpin between the DNA strands. Then UvrB probes one DNA strand for the presence of a lesion. If a lesion is found the UvrA subunits dissociate and the UvrB-DNA preincision complex is formed. This complex is subsequently bound by UvrC and the second UvrB is released. If no lesion is found, the DNA wraps around the other UvrB subunit that will check the other stand for damage. This is UvrABC system protein B from Campylobacter jejuni subsp. jejuni serotype O:2 (strain ATCC 700819 / NCTC 11168).